A 1056-amino-acid chain; its full sequence is PAX-interacting protein 1 (1056 aa).

BRCT domains follow at residues 8-93 and 94-183; these read VPEE…GFSP and ESCQ…FYHP. Residues 94–183 form an interaction with PAGR1 region; it reads ESCQIFFGLT…RRKDEAFYHP (90 aa). A compositionally biased stretch (acidic residues) spans 188-205; sequence YEEEEEEEEEGDNEEQDS. Disordered regions lie at residues 188–276, 393–412, and 419–486; these read YEEE…QRRL, THVL…HPAL, and MQLQ…FQQQ. Residues 214 to 223 show a composition bias toward low complexity; it reads SSVASSAVAS. Phosphoserine occurs at positions 223 and 230. 3 stretches are compositionally biased toward low complexity: residues 396 to 412, 419 to 435, and 445 to 486; these read LQQH…HPAL, MQLQ…QQQP, and QFPQ…FQQQ. An interaction with TP53BP1 region spans residues 577-1056; it reads QLFGHDPAVE…TLDYESYKFN (480 aa). 4 BRCT domains span residues 588-681, 688-776, 853-934, and 955-989; these read PEES…RALH, PGGK…VQYS, TPLV…NYIL, and HVSP…GGKV. The Nuclear localization signal signature appears at 655 to 672; sequence RKRCVTAHWLNTVLKKKK.

As to quaternary structure, interacts with the C-terminal transactivation domain of PAX2. Forms a constitutive complex with PAGR1 independently of the MLL2/MLL3 complex. Interacts with TP53BP1 (when phosphorylated at the N-terminus by ATM). Interacts with HLTF. Component of the KMT2 family MLL2/MLL3 complex (also named ASCOM complex), at least composed of the HMTs KMT2D and/or KMT2C, the common subunits ASH2L, RBBP5, WDR5 and DPY30, and the complex type-specific subunits PAXIP1/PTIP, PAGR1, NCOA6 and KDM6A; required for the association of PAGR1 with the MLL2/MLL3 complex. Interacts with NUPR1; this interaction prevents PAXIP1 inhibition of PAX2 transcription factor activity. As to expression, expression detected in all tissues examined, including brain stem, cerebellum, cortex, heart, spleen, kidney, liver, thymus and lung.

It is found in the nucleus matrix. Its subcellular location is the chromosome. Its function is as follows. Involved in DNA damage response and in transcriptional regulation through histone methyltransferase (HMT) complexes such as the MLL2/MLL3 complex. Plays a role in early development. In DNA damage response is required for cell survival after ionizing radiation. In vitro shown to be involved in the homologous recombination mechanism for the repair of double-strand breaks (DSBs). Its localization to DNA damage foci requires Rnf8 and Ube2n. Recruits Tp53bp1 to DNA damage foci and, at least in particular repair processes, effective DNA damage response appears to require the association with Tp53bp1 phosphorylated by Atm. Together with Tp53bp1 regulates Atm association. Proposed to recruit Pagr1 to sites of DNA damage and the Pagr1:Paxip1 complex is required for cell survival in response to DNA damage independently of the MLL2/MLL3 complex. However, this function has been questioned. Promotes ubiquitination of PCNA following UV irradiation and may regulate recruitment of polymerase eta and Rad51 to chromatin after DNA damage. Proposed to be involved in transcriptional regulation by linking MLL-containing histone methyltransferase (HMT) complexes to gene promoters by interacting with promoter-bound transcription factors such as Pax2. Associates with gene promoters that are known to be regulated by Kmt2d/Mll2. During immunoglobulin class switching in activated B-cells is involved in trimethylation of histone H3 at 'Lys-4' and in transcription initiation of downstream switch regions at the immunoglobulin heavy-chain (Igh) locus; this function appears to involve the recruitment of MLL-containing HMT complexes. Conflictingly, its function in transcriptional regulation during immunoglobulin class switching is reported to be independent of the MLL2/MLL3 complex. The chain is PAX-interacting protein 1 (Paxip1) from Mus musculus (Mouse).